A 637-amino-acid polypeptide reads, in one-letter code: Threonine--tRNA ligase (637 aa).

In terms of domain architecture, TGS spans M1–T61. The segment at D242–P533 is catalytic. 3 residues coordinate Zn(2+): C333, H384, and H510.

The protein belongs to the class-II aminoacyl-tRNA synthetase family. As to quaternary structure, homodimer. The cofactor is Zn(2+).

The protein localises to the cytoplasm. It carries out the reaction tRNA(Thr) + L-threonine + ATP = L-threonyl-tRNA(Thr) + AMP + diphosphate + H(+). Its function is as follows. Catalyzes the attachment of threonine to tRNA(Thr) in a two-step reaction: L-threonine is first activated by ATP to form Thr-AMP and then transferred to the acceptor end of tRNA(Thr). Also edits incorrectly charged L-seryl-tRNA(Thr). This is Threonine--tRNA ligase from Neisseria meningitidis serogroup A / serotype 4A (strain DSM 15465 / Z2491).